Consider the following 809-residue polypeptide: Integrin beta pat-3 (809 aa).

Residues 1-19 (MPPSTSLLLLAALLPFALP) form the signal peptide. At 20–737 (ASDWKTGEVT…KHKDCPPPVP (718 aa)) the chain is on the extracellular side. Residues asparagine 47, asparagine 141, asparagine 269, asparagine 373, and asparagine 400 are each glycosylated (N-linked (GlcNAc...) asparagine). A VWFA domain is found at 153–352 (DLYYLMDLSY…IFAVTKNNQD (200 aa)). Cystine bridges form between cysteine 476-cysteine 496, cysteine 489-cysteine 499, cysteine 501-cysteine 510, cysteine 512-cysteine 543, cysteine 526-cysteine 541, cysteine 535-cysteine 546, cysteine 548-cysteine 563, cysteine 565-cysteine 586, cysteine 570-cysteine 584, cysteine 578-cysteine 589, cysteine 591-cysteine 600, cysteine 602-cysteine 625, cysteine 609-cysteine 623, cysteine 617-cysteine 628, and cysteine 630-cysteine 644. I-EGF domains are found at residues 476-511 (CERQ…KYCE), 512-564 (CNRP…EFCE), 565-601 (CDNF…RACE), and 602-645 (CPIS…AKCE). Asparagine 530 is a glycosylation site (N-linked (GlcNAc...) asparagine). 3 N-linked (GlcNAc...) asparagine glycosylation sites follow: asparagine 672, asparagine 693, and asparagine 721. The chain crosses the membrane as a helical span at residues 738–758 (VLAIVLGVIAGIVILGILLLL). Residues 759–809 (LWKLLTVLHDRSEYATFNNERLMAKWDTNENPIYKQATTTFKNPVYAGKAN) lie on the Cytoplasmic side of the membrane. Position 792 is a phosphotyrosine (tyrosine 792).

The protein belongs to the integrin beta chain family. In terms of assembly, heterodimer of an alpha and a beta subunit. Interacts with alpha subunit ina-1. Interacts with alpha subunit pat-2. Component of an integrin containing attachment complex, composed of at least pat-2, pat-3, pat-4, pat-6, unc-52, unc-97 and unc-112. May interact with tns-1 (via C-terminus). Phosphorylated. Dephosphorylated by dep-1. In terms of tissue distribution, expressed in body wall muscles (at protein level). Expressed in gonadal sheath cells and spermatheca. Expressed in vulval cells and along the basal laminae that separate the vulval cells from the uterus (at the protein level).

It localises to the cell membrane. Its subcellular location is the lateral cell membrane. The protein resides in the basolateral cell membrane. The protein localises to the cytoplasm. It is found in the myofibril. It localises to the sarcomere. Its subcellular location is the m line. The protein resides in the cell junction. The protein localises to the focal adhesion. Functionally, integrin alpha ina-1/beta pat-3 is a receptor for laminin. Integrin alpha pat-2/beta pat-3 recognizes the sequence R-G-D in its ligands. Plays a role in cell migration, morphogenesis and probably in cell-cell interactions. During gonad morphogenesis, involved in distal tip cell (DTC)-mediated guidance of gonad elongation, in maintaining their sharp tapering morphology and in their migration. Component of an integrin containing attachment complex, which is required for muscle development and maintenance. Involved in the assembly of dense bodies and M lines during body wall muscle embryonic development by recruiting one of their components, cpna-1, to integrin-mediated attachment sites. May play a similar role in the assembly of dense bodies in gonadal myoepithelial sheath cells. Probably by acting as a receptor for apoptotic cells, plays a role in the clearance of apoptotic cells during mid-embryogenesis. Required for ovulation. Dephosphorylated, probably within the alpha pat-2/beta pat-3 integrin receptor complex, by the phosphatase dep-1, which leads to down-stream effects including the negative regulation of let-23 signaling and vulval induction. When unphosphosphorylated, recruits the cytoplasmic adapter protein tln-1 to the plasma membrane of secondary vulval precursor cells. This promotes the linking of focal adhesion sites to the F-actin cytoskeleton, and it also acts to restrict the mobility of the let-23 receptor on the plasma membrane of vulval cells which thereby attenuates let-23 signaling. Plays a role in axon regeneration after injury. This is Integrin beta pat-3 from Caenorhabditis elegans.